A 571-amino-acid polypeptide reads, in one-letter code: DExH-box ATP-dependent RNA helicase DExH16, mitochondrial (571 aa).

The transit peptide at Met-1–Pro-56 directs the protein to the mitochondrion. The 130-residue stretch at Ile-83–Pro-212 folds into the Helicase ATP-binding domain. Gly-96–Thr-103 lines the ATP pocket. The DEIH box; degenerate signature appears at Asp-176 to Gln-179. A Helicase C-terminal domain is found at Leu-213–Ser-399.

Belongs to the DExH box helicase family. As to quaternary structure, homodimer; in free form. Component of the mitochondrial degradosome (mtEXO) complex which is a heteropentamer containing 2 copies of SUPV3L1 and 3 copies of PNPT1. Requires Mg(2+) as cofactor. Mn(2+) serves as cofactor. In terms of tissue distribution, weakly expressed.

It is found in the nucleus. The protein resides in the mitochondrion matrix. The protein localises to the mitochondrion nucleoid. It catalyses the reaction ATP + H2O = ADP + phosphate + H(+). Activated by the presence of mitochondrial RNA. Functionally, major helicase player in mitochondrial RNA metabolism. Component of the mitochondrial degradosome (mtEXO) complex, that degrades 3' overhang double-stranded RNA with a 3'-to-5' directionality in an ATP-dependent manner. ATPase and ATP-dependent multisubstrate helicase, able to unwind double-stranded (ds) DNA and RNA, and RNA/DNA heteroduplexes in the 5'-to-3' direction. Plays a role in the RNA surveillance system in mitochondria; regulates the stability of mature mRNAs, the removal of aberrantly formed mRNAs and the rapid degradation of non coding processing intermediates. Required during pollen development. This chain is DExH-box ATP-dependent RNA helicase DExH16, mitochondrial, found in Arabidopsis thaliana (Mouse-ear cress).